Here is a 433-residue protein sequence, read N- to C-terminus: D-amino acid dehydrogenase (433 aa).

Residue 3 to 17 (VLVLGSGVIGTTSAY) coordinates FAD.

The protein belongs to the DadA oxidoreductase family. The cofactor is FAD.

The catalysed reaction is a D-alpha-amino acid + A + H2O = a 2-oxocarboxylate + AH2 + NH4(+). Functionally, oxidative deamination of D-amino acids. The sequence is that of D-amino acid dehydrogenase from Pseudomonas syringae pv. tomato (strain ATCC BAA-871 / DC3000).